A 360-amino-acid chain; its full sequence is Sorbitol dehydrogenase (360 aa).

Zn(2+) is bound at residue Cys42. A substrate-binding site is contributed by Tyr48. His67 and Glu68 together coordinate Zn(2+). Glu153 contributes to the substrate binding site. Residues Asp201, Arg206, 277–279 (AGN), and 301–303 (SFR) each bind NAD(+). The substrate site is built by Arg303 and Tyr304.

This sequence belongs to the zinc-containing alcohol dehydrogenase family. In terms of assembly, homotetramer. It depends on Zn(2+) as a cofactor.

The catalysed reaction is keto-D-fructose + NADH + H(+) = D-sorbitol + NAD(+). Its function is as follows. Polyol dehydrogenase that catalyzes the reversible NAD(+)-dependent oxidation of various sugar alcohols. Is active with D-sorbitol (D-glucitol) as substrate, leading to the C2-oxidized product D-fructose. Suppresses growth arrest induced by a p53 tumor mutant in fission yeast. The sequence is that of Sorbitol dehydrogenase (tms1) from Schizosaccharomyces pombe (strain 972 / ATCC 24843) (Fission yeast).